Consider the following 171-residue polypeptide: Photosystem I assembly protein Ycf3 (171 aa).

TPR repeat units follow at residues 33–66, 70–103, and 118–151; these read AFSY…EEDP, SYIL…NSRL, and GTKS…APNN.

This sequence belongs to the Ycf3 family.

The protein localises to the plastid. It localises to the chloroplast thylakoid membrane. Its function is as follows. Essential for the assembly of the photosystem I (PSI) complex. May act as a chaperone-like factor to guide the assembly of the PSI subunits. The protein is Photosystem I assembly protein Ycf3 of Emiliania huxleyi (Coccolithophore).